A 1143-amino-acid chain; its full sequence is uncharacterized protein (1143 aa).

The first 20 residues, 1–20 (MKLLLLALILVLSNINLISG), serve as a signal peptide directing secretion. At 21–1121 (NGLVWPHPRL…PAAGGEDSSA (1101 aa)) the chain is on the extracellular side. Over residues 177–203 (NSGGSWSSGGSGNSGGGWSSGGSGNSG) the composition is skewed to gly residues. The tract at residues 177 to 1120 (NSGGSWSSGG…EPAAGGEDSS (944 aa)) is disordered. Over residues 222–236 (SSGGWTSGSHSSGSW) the composition is skewed to low complexity. Gly residues predominate over residues 237–283 (SSGGGSGSSSGGQSSGSWSSGGGSSSGGHSSGSWSSGGGSSAGGGSS). A compositionally biased stretch (low complexity) spans 284 to 296 (SGSHSSGSWSSGG). A compositionally biased stretch (gly residues) spans 297–330 (SSSGGQSSGSWSSGGGSSSGGQSSGSWSSGGGSS). Positions 331–368 (SGSHSSGSWSSGGSSSGSHSSGSWSSGGSSSSSGNSGW) are enriched in low complexity. Residues 374 to 392 (GNTGGNTGGNTGGNTGGQS) show a composition bias toward gly residues. The span at 393-403 (SGNSGWMTASG) shows a compositional bias: low complexity. Composition is skewed to gly residues over residues 404 to 418 (GNTGGNTGGNTGGQS) and 430 to 444 (GNTGGNTGGNTGGQS). 2 stretches are compositionally biased toward low complexity: residues 445 to 498 (SGSS…TSSG) and 506 to 541 (GSSSSGGNSGWLTSSGGNSGGSSSSGSNSGASSSGD). Gly residues-rich tracts occupy residues 555-573 (GNTGGNSGAATGGNSGGNS), 580-596 (GNSGGASSSGGNTGGNS), 604-622 (GNTGGNSGAATGGNSGGNS), 629-783 (GNSG…GGNS), 790-843 (GNSG…GGAS), and 851-905 (GNSG…GGNS). Residues 906–1059 (GAATGANSGA…GGNGASGAAN (154 aa)) show a composition bias toward low complexity. A compositionally biased stretch (polar residues) spans 1062–1078 (SIVTPNDQNVSPLSNSD). The segment covering 1094 to 1114 (PTSRAPTVTPTPTSSAEEPAA) has biased composition (low complexity). A helical transmembrane segment spans residues 1122-1142 (ISKYSIQSFGIFVLSMIIYLV). Ile1143 is a topological domain (cytoplasmic).

The protein resides in the membrane. This is an uncharacterized protein from Dictyostelium discoideum (Social amoeba).